We begin with the raw amino-acid sequence, 401 residues long: Putative phosphatidylinositol 4-phosphate 5-kinase 11 (401 aa).

Positions 1-390 (MELRATVENR…RFQDFVSNIF (390 aa)) constitute a PIPK domain. The span at 242–260 (SFKSNSTKSMKTASSSPDR) shows a compositional bias: polar residues. A disordered region spans residues 242–268 (SFKSNSTKSMKTASSSPDRSSVAMYSC). Residues 350–371 (YGMKKRIEHCYKSIQYNSNSIS) form an activation loop region.

The enzyme catalyses a 1,2-diacyl-sn-glycero-3-phospho-(1D-myo-inositol 4-phosphate) + ATP = a 1,2-diacyl-sn-glycero-3-phospho-(1D-myo-inositol-4,5-bisphosphate) + ADP + H(+). This is Putative phosphatidylinositol 4-phosphate 5-kinase 11 (PIP5K11) from Arabidopsis thaliana (Mouse-ear cress).